Here is a 350-residue protein sequence, read N- to C-terminus: 2-oxoisovalerate dehydrogenase subunit beta (350 aa).

As to quaternary structure, heterodimer of an alpha and a beta chain. Thiamine diphosphate is required as a cofactor.

It carries out the reaction N(6)-[(R)-lipoyl]-L-lysyl-[protein] + 3-methyl-2-oxobutanoate + H(+) = N(6)-[(R)-S(8)-2-methylpropanoyldihydrolipoyl]-L-lysyl-[protein] + CO2. The branched-chain alpha-keto dehydrogenase complex catalyzes the overall conversion of alpha-keto acids to acyl-CoA and CO(2). It contains multiple copies of three enzymatic components: branched-chain alpha-keto acid decarboxylase (E1), lipoamide acyltransferase (E2) and lipoamide dehydrogenase (E3). This is 2-oxoisovalerate dehydrogenase subunit beta (bkdA2) from Pseudomonas aeruginosa (strain ATCC 15692 / DSM 22644 / CIP 104116 / JCM 14847 / LMG 12228 / 1C / PRS 101 / PAO1).